Here is a 156-residue protein sequence, read N- to C-terminus: Rhombotin-1 (156 aa).

LIM zinc-binding domains follow at residues 22-84 (KGCA…LFGT) and 86-148 (GNCA…GQLN).

The protein resides in the nucleus. May be involved in gene regulation within neural lineage cells potentially by direct DNA binding or by binding to other transcription factors. This Xenopus laevis (African clawed frog) protein is Rhombotin-1.